A 396-amino-acid polypeptide reads, in one-letter code: Elongation factor Tu (396 aa).

Residues 10–206 (KPHVNVGTIG…AVDAYIPTPQ (197 aa)) enclose the tr-type G domain. Residues 19 to 26 (GHVDHGKT) form a G1 region. 19–26 (GHVDHGKT) serves as a coordination point for GTP. Residue T26 coordinates Mg(2+). Residues 60–64 (GITIA) form a G2 region. Positions 81-84 (DCPG) are G3. GTP contacts are provided by residues 81-85 (DCPGH) and 136-139 (NKVD). The G4 stretch occupies residues 136-139 (NKVD). Positions 174–176 (SAL) are G5.

The protein belongs to the TRAFAC class translation factor GTPase superfamily. Classic translation factor GTPase family. EF-Tu/EF-1A subfamily. As to quaternary structure, monomer.

Its subcellular location is the cytoplasm. It carries out the reaction GTP + H2O = GDP + phosphate + H(+). Its function is as follows. GTP hydrolase that promotes the GTP-dependent binding of aminoacyl-tRNA to the A-site of ribosomes during protein biosynthesis. This chain is Elongation factor Tu, found in Anaeromyxobacter dehalogenans (strain 2CP-C).